The sequence spans 234 residues: Riboflavin kinase (234 aa).

The segment at 1–98 (MAESTTAVGH…QEIFGDNSSV (98 aa)) is H-T-H motif-like. Residues 99–234 (VELTGTVTSG…RITVQLKPKE (136 aa)) form a riboflavin kinase region. 108–113 (GMGEGR) contributes to the CDP binding site. Residues Thr-137 and Asn-139 each contribute to the Mg(2+) site. Positions 199 and 207 each coordinate FMN. Position 212–215 (212–215 (ERLR)) interacts with CDP.

Belongs to the archaeal riboflavin kinase family. Requires Mg(2+) as cofactor.

It carries out the reaction riboflavin + CTP = CDP + FMN + H(+). It participates in cofactor biosynthesis; FMN biosynthesis; FMN from riboflavin (CTP route): step 1/1. Its function is as follows. Catalyzes the CTP-dependent phosphorylation of riboflavin (vitamin B2) to form flavin mononucleotide (FMN). The polypeptide is Riboflavin kinase (ribK) (Haloquadratum walsbyi (strain DSM 16790 / HBSQ001)).